The primary structure comprises 123 residues: Protein Wnt-3 (123 aa).

The O-palmitoleoyl serine; by PORCN moiety is linked to residue serine 1. Residues cysteine 89 and cysteine 104 are joined by a disulfide bond. The N-linked (GlcNAc...) asparagine glycan is linked to asparagine 90.

It belongs to the Wnt family. Post-translationally, palmitoleoylation is required for efficient binding to frizzled receptors. Depalmitoleoylation leads to Wnt signaling pathway inhibition.

Its subcellular location is the secreted. The protein localises to the extracellular space. It is found in the extracellular matrix. Its function is as follows. Ligand for members of the frizzled family of seven transmembrane receptors. Functions in the canonical Wnt signaling pathway that results in activation of transcription factors of the TCF/LEF family. Required for normal embryonic development. This Eptatretus stoutii (Pacific hagfish) protein is Protein Wnt-3 (WNT-3).